A 757-amino-acid chain; its full sequence is Centrosomal protein of 68 kDa (757 aa).

Basic and acidic residues-rich tracts occupy residues 1–17 (MALG…EDTK) and 86–96 (ANREPVAERSE). Disordered regions lie at residues 1-47 (MALG…RLEA), 67-158 (WIGT…PSLA), 192-259 (QPSS…GGDA), 311-480 (PGPQ…ESDD), 509-551 (PTGD…SGDP), and 597-618 (LDRW…GGEQ). Residues 125 to 144 (LSSSEEFPQTLSLPRTTTIC) are compositionally biased toward polar residues. Composition is skewed to low complexity over residues 192-206 (QPSS…TGSS) and 224-240 (VSSS…SSVV). S332 bears the Phosphoserine; by PLK1 mark. Over residues 339–355 (FSVSPASTLKSPTNVSP) the composition is skewed to polar residues. Basic and acidic residues-rich tracts occupy residues 405–432 (GSRD…KHLD) and 439–456 (RTRD…EKRT). Polar residues predominate over residues 457–467 (SQSARRPTCTE). 2 positions are modified to phosphoserine: S472 and S478. Residues 524 to 543 (SDGPASFPSSSSQSQLPPGA) show a composition bias toward low complexity.

As to quaternary structure, interacts with CNTLN; the interaction recruits CEP68 to the centrosome. Interacts with the SCF(FBXW11) complex which contains SKP1, CUL1 and FBXW11; the interaction is probably mediated by FBXW11 and the complex also contains CDK5RAP2 and PCNT. Also interacts with F-box protein BTRC. Interacts with serine/threonine-protein kinase PLK1; the interaction leads to phosphorylation of CEP68 and its subsequent degradation. Interacts with NEK2; the interaction leads to phosphorylation of CEP68. In terms of processing, phosphorylation by PLK1 is required for binding to BTRC in prometaphase. Phosphorylated directly or indirectly by NEK2. NEK2-mediated phosphorylation promotes CEP68 dissociation from the centrosome and its degradation at the onset of mitosis. Ubiquitinated and targeted for proteasomal degradation in early mitosis by the SCF(BTRC) and/or SCF(FBXW11) E3 ubiquitin-protein ligase complexes. Degradation is complete by prometaphase and is required for removal of CDK5RAP2 from the peripheral pericentriolar material and subsequent centriole separation.

It localises to the cytoplasm. It is found in the cytoskeleton. The protein localises to the microtubule organizing center. The protein resides in the centrosome. Functionally, involved in maintenance of centrosome cohesion, probably as part of a linker structure which prevents centrosome splitting. Required for localization of CDK5RAP2 to the centrosome during interphase. Contributes to CROCC/rootletin filament formation. The sequence is that of Centrosomal protein of 68 kDa (CEP68) from Homo sapiens (Human).